Consider the following 1289-residue polypeptide: Pesticidal crystal protein Cry5Ab (1289 aa).

The segment at 1263-1289 (PLPTDDQNSEGNTASSTNSDTSMNNNQ) is disordered. Residues 1274–1289 (NTASSTNSDTSMNNNQ) show a composition bias toward low complexity.

This sequence belongs to the delta endotoxin family.

Endotoxin with nematicidal activity. The sequence is that of Pesticidal crystal protein Cry5Ab (cry5Ab) from Bacillus thuringiensis subsp. darmstadiensis.